A 439-amino-acid chain; its full sequence is Tol-Pal system protein TolB (439 aa).

Residues methionine 1–threonine 22 form the signal peptide.

It belongs to the TolB family. In terms of assembly, the Tol-Pal system is composed of five core proteins: the inner membrane proteins TolA, TolQ and TolR, the periplasmic protein TolB and the outer membrane protein Pal. They form a network linking the inner and outer membranes and the peptidoglycan layer.

The protein localises to the periplasm. Part of the Tol-Pal system, which plays a role in outer membrane invagination during cell division and is important for maintaining outer membrane integrity. In Xylella fastidiosa (strain 9a5c), this protein is Tol-Pal system protein TolB.